Consider the following 134-residue polypeptide: NAD(P)H-quinone oxidoreductase subunit 3 (134 aa).

The next 3 helical transmembrane spans lie at 20–40 (GYDA…LALV), 78–98 (MFAL…PWAV), and 103–123 (LGLL…VALA).

The protein belongs to the complex I subunit 3 family. In terms of assembly, NDH-1 can be composed of about 15 different subunits; different subcomplexes with different compositions have been identified which probably have different functions.

It localises to the cellular thylakoid membrane. The enzyme catalyses a plastoquinone + NADH + (n+1) H(+)(in) = a plastoquinol + NAD(+) + n H(+)(out). It carries out the reaction a plastoquinone + NADPH + (n+1) H(+)(in) = a plastoquinol + NADP(+) + n H(+)(out). Its function is as follows. NDH-1 shuttles electrons from an unknown electron donor, via FMN and iron-sulfur (Fe-S) centers, to quinones in the respiratory and/or the photosynthetic chain. The immediate electron acceptor for the enzyme in this species is believed to be plastoquinone. Couples the redox reaction to proton translocation, and thus conserves the redox energy in a proton gradient. Cyanobacterial NDH-1 also plays a role in inorganic carbon-concentration. This Prochlorococcus marinus (strain MIT 9303) protein is NAD(P)H-quinone oxidoreductase subunit 3.